A 317-amino-acid polypeptide reads, in one-letter code: Homoserine O-succinyltransferase (317 aa).

C142 (acyl-thioester intermediate) is an active-site residue. The substrate site is built by K163 and S192. The Proton acceptor role is filled by H235. E237 is a catalytic residue. R249 contributes to the substrate binding site.

This sequence belongs to the MetA family.

The protein resides in the cytoplasm. It catalyses the reaction L-homoserine + succinyl-CoA = O-succinyl-L-homoserine + CoA. It functions in the pathway amino-acid biosynthesis; L-methionine biosynthesis via de novo pathway; O-succinyl-L-homoserine from L-homoserine: step 1/1. Its function is as follows. Transfers a succinyl group from succinyl-CoA to L-homoserine, forming succinyl-L-homoserine. The chain is Homoserine O-succinyltransferase from Aeromonas hydrophila subsp. hydrophila (strain ATCC 7966 / DSM 30187 / BCRC 13018 / CCUG 14551 / JCM 1027 / KCTC 2358 / NCIMB 9240 / NCTC 8049).